Consider the following 185-residue polypeptide: Ribosome-recycling factor (185 aa).

The protein belongs to the RRF family.

The protein localises to the cytoplasm. Responsible for the release of ribosomes from messenger RNA at the termination of protein biosynthesis. May increase the efficiency of translation by recycling ribosomes from one round of translation to another. In Bacillus pumilus (strain SAFR-032), this protein is Ribosome-recycling factor.